The chain runs to 101 residues: Large ribosomal subunit protein eL36 (101 aa).

2 disordered regions span residues 1 to 31 (MGEI…GFLS) and 75 to 101 (GTHM…SKGE).

This sequence belongs to the eukaryotic ribosomal protein eL36 family.

This is Large ribosomal subunit protein eL36 (RL36) from Ulva compressa (Green alga).